A 319-amino-acid polypeptide reads, in one-letter code: tRNA uridine(34) hydroxylase (319 aa).

Positions 125–219 constitute a Rhodanese domain; sequence LDENTVVIDA…YGKDPEVQGD (95 aa). The active-site Cysteine persulfide intermediate is the C179.

Belongs to the TrhO family.

It carries out the reaction uridine(34) in tRNA + AH2 + O2 = 5-hydroxyuridine(34) in tRNA + A + H2O. Its function is as follows. Catalyzes oxygen-dependent 5-hydroxyuridine (ho5U) modification at position 34 in tRNAs. The protein is tRNA uridine(34) hydroxylase of Lactococcus lactis subsp. lactis (strain IL1403) (Streptococcus lactis).